The chain runs to 311 residues: L-lactate dehydrogenase 2 (311 aa).

3 residues coordinate NAD(+): V14, D35, and R40. Substrate contacts are provided by residues R90 and 122 to 125; that span reads NPCD. Residues 120 to 122 and T145 contribute to the NAD(+) site; that span reads ATN. Substrate is bound at residue 150 to 153; the sequence is DTTR. H177 functions as the Proton acceptor in the catalytic mechanism. T230 is a substrate binding site.

The protein belongs to the LDH/MDH superfamily. LDH family. Homotetramer.

It is found in the cytoplasm. The catalysed reaction is (S)-lactate + NAD(+) = pyruvate + NADH + H(+). It participates in fermentation; pyruvate fermentation to lactate; (S)-lactate from pyruvate: step 1/1. In terms of biological role, catalyzes the conversion of lactate to pyruvate. The polypeptide is L-lactate dehydrogenase 2 (Listeria monocytogenes serovar 1/2a (strain ATCC BAA-679 / EGD-e)).